The following is a 439-amino-acid chain: Magnesium-dependent glutamate N-prenyltransferase (439 aa).

Mg(2+)-binding residues include Asn-322, Thr-326, Glu-330, and Phe-337.

Belongs to the terpene synthase family. It depends on Mg(2+) as a cofactor.

The enzyme catalyses dimethylallyl diphosphate + L-glutamate = prekainate + diphosphate. It functions in the pathway secondary metabolite biosynthesis. In terms of biological role, magnesium-dependent glutamate N-prenyltransferase: part of the gene cluster that mediates the biosynthesis of kainic acid (KA) and derivatives, natural products with neurochemical activity acting as ionotropic glutamate receptor (iGluR) agonists, thus being neurotoxins. Catalyzes the conversion of L-glutamic acid (L-Glu) to prekainic acid in the presence of dimethylallyl diphosphate (DMAPP). Can also use geranyl diphosphate (GPP) as substrate, thus leading to the formation of N-geranyl-L-glutamic acid (L-NGG). In Digenea simplex (Marine red alga), this protein is Magnesium-dependent glutamate N-prenyltransferase.